The following is a 354-amino-acid chain: Fusarinine C esterase sidJ (354 aa).

This sequence belongs to the sidJ hydrolase family. In terms of assembly, homodimer.

The catalysed reaction is fusarinine C + 3 H2O = 3 fusarinine + Fe(3+). Functionally, displays specific fusarinine C (FsC) esterase activity but does not hydrolyze triacetylfusarinine C (TAFC), which has the same core structure as fusarinine C. Both extra- and intracellular siderophores have been shown to be crucial for the virulence. Subsequent to chelation of iron and uptake, FsC and TAFC are hydrolyzed and the iron is transferred to the metabolism or to the intracellular siderophore ferricrocin (FC) for transport and storage of iron. In Aspergillus fumigatus (strain ATCC MYA-4609 / CBS 101355 / FGSC A1100 / Af293) (Neosartorya fumigata), this protein is Fusarinine C esterase sidJ.